Here is a 487-residue protein sequence, read N- to C-terminus: NADH-quinone oxidoreductase subunit N (487 aa).

14 helical membrane passes run 12 to 32 (VLILPEILIALGIMALLLIGV), 40 to 60 (LTVTGLTIALLFATIILIVLF), 79 to 99 (YMKILTLIGALFSLILSVGFS), 104 to 124 (FDIFEFPILVLLATLGMMLMI), 129 to 149 (MLSLYMGLELQSLALYVLAAI), 164 to 184 (FVLGALSSGLLLYGISLLYGF), 201 to 221 (ILHLGVIFGIVFILAGLAFKI), 248 to 268 (APKIAAMALIIRVIVFAFIPL), 281 to 301 (ILIFMAISSMALGAFAAIGQT), 310 to 330 (SSIGHMGYALVGLAAGNILGV), 332 to 352 (GILIYMTIYLGMTIGSFAFIL), 378 to 398 (AIVMTIQLFSLASIPPMAGFF), 411 to 431 (GLVPLAIVGMVLSVIGAFYYL), and 455 to 475 (LCLCLSALFVLFYVFFGFWFS).

It belongs to the complex I subunit 2 family. In terms of assembly, NDH-1 is composed of 14 different subunits. Subunits NuoA, H, J, K, L, M, N constitute the membrane sector of the complex.

It localises to the cell inner membrane. The enzyme catalyses a quinone + NADH + 5 H(+)(in) = a quinol + NAD(+) + 4 H(+)(out). In terms of biological role, NDH-1 shuttles electrons from NADH, via FMN and iron-sulfur (Fe-S) centers, to quinones in the respiratory chain. The immediate electron acceptor for the enzyme in this species is believed to be ubiquinone. Couples the redox reaction to proton translocation (for every two electrons transferred, four hydrogen ions are translocated across the cytoplasmic membrane), and thus conserves the redox energy in a proton gradient. The sequence is that of NADH-quinone oxidoreductase subunit N from Bartonella bacilliformis (strain ATCC 35685 / KC583 / Herrer 020/F12,63).